We begin with the raw amino-acid sequence, 295 residues long: G1/S-specific cyclin-D1 (295 aa).

Residues 28–152 form the Cyclin N-terminal domain; sequence LRAMLKAEET…LLVNKLKWNL (125 aa). The interval 262-295 is disordered; that stretch reads AQQNMDPKAAEEEEEEEEEVDLACTPTDVRDVDI. Lys-269 participates in a covalent cross-link: Glycyl lysine isopeptide (Lys-Gly) (interchain with G-Cter in ubiquitin). A compositionally biased stretch (acidic residues) spans 272 to 282; it reads EEEEEEEEEVD. The residue at position 286 (Thr-286) is a Phosphothreonine.

Belongs to the cyclin family. Cyclin D subfamily. As to quaternary structure, interacts with either CDK4 or CDK6 protein kinase to form a serine/threonine kinase holoenzyme complex. The cyclin subunit imparts substrate specificity to the complex. Component of the ternary complex CCND1/CDK4/CDKN1B required for nuclear translocation and modulation of CDK4-mediated kinase activity. Interacts directly with CDKN1B. Can form similar complexes with either CDKN1A or CDKN2A. Interacts with UHRF2; the interaction ubiquitinates CCND1 and appears to occur independently of phosphorylation. Interacts with USP2. Interacts (via cyclin N-terminal domain) with INSM1 (via N-terminal region); the interaction competes with the binding of CCND1 to CDK4 during cell cycle progression and inhibits CDK4 activity. Interacts with CDK4; the interaction is prevented with the binding of CCND1 to INSM1 during cell cycle progression. Post-translationally, phosphorylation at Thr-286 by MAP kinases is required for ubiquitination and degradation by the DCX(AMBRA1) complex. It also plays an essential role for recognition by the FBXO31 component of SCF (SKP1-cullin-F-box) protein ligase complex following DNA damage. Ubiquitinated at Lys-269 by the DCX(AMBRA1) complex during the transition from G1 to S cell phase, leading to its degradation: ubiquitination is dependent on Thr-286 phosphorylation. The DCX(AMBRA1) complex represents the major regulator of CCND1 stability during the G1/S transition. Also ubiquitinated by the SCF(FBXO4) and Cul7-RING(FBXW8) ubiquitin-protein ligase complexes. Following DNA damage it is ubiquitinated by the SCF(FBXO31) protein ligase complex. SCF(FBXO31) ubiquitination is dependent on Thr-286 phosphorylation. Ubiquitinated also by UHRF2 apparently in a phosphorylation-independent manner. Ubiquitination leads to its degradation and G1 arrest. Deubiquitinated by USP2; leading to its stabilization.

The protein localises to the nucleus. Its subcellular location is the cytoplasm. It is found in the nucleus membrane. In terms of biological role, regulatory component of the cyclin D1-CDK4 (DC) complex that phosphorylates and inhibits members of the retinoblastoma (RB) protein family including RB1 and regulates the cell-cycle during G(1)/S transition. Phosphorylation of RB1 allows dissociation of the transcription factor E2F from the RB/E2F complex and the subsequent transcription of E2F target genes which are responsible for the progression through the G(1) phase. Hypophosphorylates RB1 in early G(1) phase. Cyclin D-CDK4 complexes are major integrators of various mitogenenic and antimitogenic signals. Also a substrate for SMAD3, phosphorylating SMAD3 in a cell-cycle-dependent manner and repressing its transcriptional activity. Component of the ternary complex, cyclin D1/CDK4/CDKN1B, required for nuclear translocation and activity of the cyclin D-CDK4 complex. Exhibits transcriptional corepressor activity with INSM1 on the NEUROD1 and INS promoters in a cell cycle-independent manner. This Homo sapiens (Human) protein is G1/S-specific cyclin-D1.